Consider the following 1556-residue polypeptide: uncharacterized protein (1556 aa).

The residue at position 2 (serine 2) is an N-acetylserine. Over residues asparagine 145–lysine 156 the composition is skewed to basic and acidic residues. A disordered region spans residues asparagine 145–aspartate 170. The 206-residue stretch at serine 378–proline 583 folds into the Helicase ATP-binding domain. An ATP-binding site is contributed by glutamate 391–threonine 398. Serine 810 bears the Phosphoserine mark. The segment at serine 810–methionine 850 is disordered. Composition is skewed to basic and acidic residues over residues methionine 817 to serine 827 and arginine 834 to asparagine 846. The RING-type zinc finger occupies cysteine 1239–lysine 1277. Residues arginine 1297 to alanine 1309 are compositionally biased toward basic and acidic residues. 2 disordered regions span residues arginine 1297–asparagine 1319 and glutamate 1508–glutamate 1534. A compositionally biased stretch (low complexity) spans aspartate 1310–asparagine 1319. Positions lysine 1363–alanine 1531 constitute a Helicase C-terminal domain. Positions glutamate 1508–glutamate 1518 are enriched in basic and acidic residues. Residues alanine 1519 to aspartate 1529 are compositionally biased toward acidic residues.

The protein belongs to the SNF2/RAD54 helicase family.

Its subcellular location is the nucleus. Functionally, is probably involved in a pathway contributing to genomic integrity. This is an uncharacterized protein from Saccharomyces cerevisiae (strain ATCC 204508 / S288c) (Baker's yeast).